Reading from the N-terminus, the 310-residue chain is Porphobilinogen deaminase (310 aa).

An S-(dipyrrolylmethanemethyl)cysteine modification is found at Cys-242.

Belongs to the HMBS family. As to quaternary structure, monomer. Requires dipyrromethane as cofactor.

The enzyme catalyses 4 porphobilinogen + H2O = hydroxymethylbilane + 4 NH4(+). It functions in the pathway porphyrin-containing compound metabolism; protoporphyrin-IX biosynthesis; coproporphyrinogen-III from 5-aminolevulinate: step 2/4. Tetrapolymerization of the monopyrrole PBG into the hydroxymethylbilane pre-uroporphyrinogen in several discrete steps. The sequence is that of Porphobilinogen deaminase from Shewanella baltica (strain OS223).